Here is a 397-residue protein sequence, read N- to C-terminus: L-cysteine desulfidase (397 aa).

The active-site Proton acceptor is cysteine 23. Cysteine 288, cysteine 330, and cysteine 337 together coordinate [4Fe-4S] cluster.

This sequence belongs to the L-cysteine desulfidase family. As to quaternary structure, homotrimer. [4Fe-4S] cluster is required as a cofactor.

It carries out the reaction L-cysteine + H2O = hydrogen sulfide + pyruvate + NH4(+) + H(+). Its function is as follows. Catalyzes the cleavage of L-cysteine to form 2-aminoprop-2-enoate and sulfide. The former then spontaneously hydrolyzes to pyruvate and NH(3). May be responsible for the production of sulfide required for the biosynthesis of iron-sulfur centers in this archaea. This is L-cysteine desulfidase from Methanococcus maripaludis (strain C5 / ATCC BAA-1333).